Reading from the N-terminus, the 155-residue chain is 6,7-dimethyl-8-ribityllumazine synthase (155 aa).

5-amino-6-(D-ribitylamino)uracil contacts are provided by residues tryptophan 23, 57 to 59 (AWE), and 81 to 83 (CVI). Residue 86 to 87 (DT) participates in (2S)-2-hydroxy-3-oxobutyl phosphate binding. Residue histidine 89 is the Proton donor of the active site. Asparagine 114 contacts 5-amino-6-(D-ribitylamino)uracil. Arginine 128 provides a ligand contact to (2S)-2-hydroxy-3-oxobutyl phosphate.

Belongs to the DMRL synthase family. In terms of assembly, forms an icosahedral capsid composed of 60 subunits, arranged as a dodecamer of pentamers.

It catalyses the reaction (2S)-2-hydroxy-3-oxobutyl phosphate + 5-amino-6-(D-ribitylamino)uracil = 6,7-dimethyl-8-(1-D-ribityl)lumazine + phosphate + 2 H2O + H(+). The protein operates within cofactor biosynthesis; riboflavin biosynthesis; riboflavin from 2-hydroxy-3-oxobutyl phosphate and 5-amino-6-(D-ribitylamino)uracil: step 1/2. Functionally, catalyzes the formation of 6,7-dimethyl-8-ribityllumazine by condensation of 5-amino-6-(D-ribitylamino)uracil with 3,4-dihydroxy-2-butanone 4-phosphate. This is the penultimate step in the biosynthesis of riboflavin. The polypeptide is 6,7-dimethyl-8-ribityllumazine synthase (Stenotrophomonas maltophilia (strain R551-3)).